A 329-amino-acid polypeptide reads, in one-letter code: Serpentine receptor class alpha-2 (329 aa).

Helical transmembrane passes span 25–45 (FVYL…VKIL), 57–77 (ILLV…GIEA), 104–124 (YYKI…GLLI), 144–164 (CAVI…LIVW), 188–208 (HYFT…TFIL), 240–260 (FLTV…IVLV), and 273–293 (LLVV…VILV).

The protein belongs to the nematode receptor-like protein sra family.

The protein resides in the membrane. The polypeptide is Serpentine receptor class alpha-2 (sra-2) (Caenorhabditis elegans).